Consider the following 160-residue polypeptide: Ribosomal RNA large subunit methyltransferase H (160 aa).

S-adenosyl-L-methionine contacts are provided by residues L76, G108, and 127-132 (LGKMTW).

The protein belongs to the RNA methyltransferase RlmH family. As to quaternary structure, homodimer.

It is found in the cytoplasm. The catalysed reaction is pseudouridine(1915) in 23S rRNA + S-adenosyl-L-methionine = N(3)-methylpseudouridine(1915) in 23S rRNA + S-adenosyl-L-homocysteine + H(+). Specifically methylates the pseudouridine at position 1915 (m3Psi1915) in 23S rRNA. The chain is Ribosomal RNA large subunit methyltransferase H from Rhizobium johnstonii (strain DSM 114642 / LMG 32736 / 3841) (Rhizobium leguminosarum bv. viciae).